The primary structure comprises 250 residues: Cell division protein ZapD (250 aa).

Belongs to the ZapD family. As to quaternary structure, interacts with FtsZ.

It is found in the cytoplasm. In terms of biological role, cell division factor that enhances FtsZ-ring assembly. Directly interacts with FtsZ and promotes bundling of FtsZ protofilaments, with a reduction in FtsZ GTPase activity. This is Cell division protein ZapD from Yersinia pestis bv. Antiqua (strain Antiqua).